The following is a 454-amino-acid chain: tRNA modification GTPase MnmE (454 aa).

Residues R23, E80, and K120 each contribute to the (6S)-5-formyl-5,6,7,8-tetrahydrofolate site. Residues 216–377 (GMKVVIAGRP…LRNHLKQSMG (162 aa)) form the TrmE-type G domain. N226 is a K(+) binding site. GTP is bound by residues 226–231 (NAGKSS), 245–251 (TDIAGTT), 270–273 (DTAG), 335–338 (NKAD), and 358–360 (SAR). S230 is a binding site for Mg(2+). Residues T245, I247, and T250 each contribute to the K(+) site. A Mg(2+)-binding site is contributed by T251. K454 is a (6S)-5-formyl-5,6,7,8-tetrahydrofolate binding site.

The protein belongs to the TRAFAC class TrmE-Era-EngA-EngB-Septin-like GTPase superfamily. TrmE GTPase family. In terms of assembly, homodimer. Heterotetramer of two MnmE and two MnmG subunits. K(+) serves as cofactor.

The protein resides in the cytoplasm. Exhibits a very high intrinsic GTPase hydrolysis rate. Involved in the addition of a carboxymethylaminomethyl (cmnm) group at the wobble position (U34) of certain tRNAs, forming tRNA-cmnm(5)s(2)U34. This is tRNA modification GTPase MnmE from Shigella dysenteriae serotype 1 (strain Sd197).